Consider the following 223-residue polypeptide: Germin-like protein 1-3 (223 aa).

The N-terminal stretch at 1 to 22 (MAKLILATFAVVFMALAATSLA) is a signal peptide. A disulfide bridge links Cys-32 with Cys-50. A glycan (N-linked (GlcNAc...) asparagine) is linked at Asn-55. The region spanning 64–212 (DGLMKAGNTG…AFQVDGGMVE (149 aa)) is the Cupin type-1 domain. Mn(2+) contacts are provided by His-112, His-114, Glu-119, and His-158.

It belongs to the germin family. Oligomer (believed to be a pentamer but probably hexamer).

The protein localises to the secreted. Its subcellular location is the extracellular space. It localises to the apoplast. In terms of biological role, may play a role in plant defense. Probably has no oxalate oxidase activity even if the active site is conserved. The sequence is that of Germin-like protein 1-3 (GER8) from Oryza sativa subsp. japonica (Rice).